A 295-amino-acid polypeptide reads, in one-letter code: Ribosomal protein L11 methyltransferase (295 aa).

Thr139, Gly166, Asp188, and Asn231 together coordinate S-adenosyl-L-methionine.

This sequence belongs to the methyltransferase superfamily. PrmA family.

It localises to the cytoplasm. It catalyses the reaction L-lysyl-[protein] + 3 S-adenosyl-L-methionine = N(6),N(6),N(6)-trimethyl-L-lysyl-[protein] + 3 S-adenosyl-L-homocysteine + 3 H(+). Functionally, methylates ribosomal protein L11. The polypeptide is Ribosomal protein L11 methyltransferase (Cyanothece sp. (strain PCC 7425 / ATCC 29141)).